Reading from the N-terminus, the 279-residue chain is Tryptophan 2,3-dioxygenase (279 aa).

Residues 48–52 (FIVIH), tyrosine 110, and arginine 114 contribute to the substrate site. Histidine 237 contributes to the heme binding site. Threonine 251 provides a ligand contact to substrate.

It belongs to the tryptophan 2,3-dioxygenase family. As to quaternary structure, homotetramer. Requires heme as cofactor.

The catalysed reaction is L-tryptophan + O2 = N-formyl-L-kynurenine. Its pathway is amino-acid degradation; L-tryptophan degradation via kynurenine pathway; L-kynurenine from L-tryptophan: step 1/2. Heme-dependent dioxygenase that catalyzes the oxidative cleavage of the L-tryptophan (L-Trp) pyrrole ring and converts L-tryptophan to N-formyl-L-kynurenine. Catalyzes the oxidative cleavage of the indole moiety. The polypeptide is Tryptophan 2,3-dioxygenase (Bacillus anthracis).